A 571-amino-acid chain; its full sequence is Zinc metalloproteinase-disintegrin-like jararhagin (571 aa).

Residues 1–150 (ATRPKGAVQP…KKASQLAFTA (150 aa)) constitute a propeptide that is removed on maturation. A Pyrrolidone carboxylic acid (Glu) modification is found at Glu-151. Positions 159 to 355 (KYIEFFVVVD…HNPECIINEP (197 aa)) constitute a Peptidase M12B domain. 2 residues coordinate Ca(2+): Glu-162 and Asp-246. 3 cysteine pairs are disulfide-bonded: Cys-270-Cys-350, Cys-310-Cys-334, and Cys-312-Cys-317. Residue His-295 participates in Zn(2+) binding. Glu-296 is an active-site residue. The Zn(2+) site is built by His-299 and His-305. Residue Asn-333 is glycosylated (N-linked (GlcNAc...) asparagine). Residues Cys-350, Asn-353, Val-365, Asn-368, Leu-370, Glu-372, Glu-375, and Asp-378 each coordinate Ca(2+). Positions 363–449 (PPVCGNELLE…ECPADVFHKN (87 aa)) constitute a Disintegrin domain. Cystine bridges form between Cys-366–Cys-385, Cys-366–Cys-395, Cys-377–Cys-390, Cys-377–Cys-395, Cys-379–Cys-385, Cys-389–Cys-412, Cys-403–Cys-409, Cys-408–Cys-434, Cys-421–Cys-441, Cys-428–Cys-453, Cys-428–Cys-460, Cys-453–Cys-465, Cys-460–Cys-465, Cys-472–Cys-487, Cys-472–Cys-522, Cys-487–Cys-533, Cys-500–Cys-510, Cys-510–Cys-517, Cys-517–Cys-559, Cys-522–Cys-533, Cys-553–Cys-564, and Cys-559–Cys-564. Residues 427-429 (ECD) carry the D/ECD-tripeptide motif. Ca(2+)-binding residues include Asp-429, Pro-430, Glu-432, Asp-444, and Val-445.

It belongs to the venom metalloproteinase (M12B) family. P-III subfamily. P-IIIb sub-subfamily. As to quaternary structure, monomer (Jararhagin and Jararhagin-C) and dimer (Jaracetin). The cofactor is Zn(2+). In terms of processing, the N-terminus of Jararhagin is blocked. Expressed by the venom gland.

It localises to the secreted. The catalysed reaction is Cleavage of 10-His-|-Leu-11, 14-Ala-|-Leu-15, 16-Tyr-|-Leu-17 and 24-Phe-|-Phe-25 bonds in insulin B chain.. With respect to regulation, inhibited by EDTA, 1,10 phenanthroline and batimastat (a peptidomimetic MMP inhibitor). Functionally, snake venom zinc metalloproteinase-disintegrin-like jararhagin: causes hemorrhage. This is the result of the degradation of sub-endothelial matrix proteins leading to the disruption of the blood vessel endothelium, with accompanying disturbances in platelet function. It is able to degrade von Willebrand factor (vWF) and it hydrolyzes the alpha-chain of fibrinogen (FGA) while leaving the beta and gamma chains unaffected. It inhibits collagen-induced platelet aggregation through the binding to alpha-2/beta-1 integrin (ITGA2/ITGB1) (collagen receptor), and it cleaves the beta-1 subunit of the same integrin, inhibiting platelet interaction and ultimately causing impairment of signal transduction. It has inability to be affected by the plasma inhibitor alpha(2)-macroglobulin. In fibroblasts, it functions as a collagen-mimetic substrate and, in endothelial cells, it causes apoptosis and indirectly inhibits cell proliferation by release of angiostatin-like compounds. It induces a strong pro-inflammatory response characterized by intense leukocyte accumulation and release of cytokines at the site of the injection. Although hemorrhage and edema are a response to the direct effect of this toxin, jararhagin-induced inflammation and necrosis are dependent on macrophages and key pro-inflammatory cytokines or their receptors. It also possesses anti-tumorgenic properties. The monomeric form inhibits collagen- and ADP-induced platelet aggregation, but has no effect on glycoprotein Ib-IX-dependent (GP1BA/GP5/GP9) platelet agglutination. Locally activates the early events of an acute inflammatory response as leukocyte rolling and pro-inflammatory cytokine release. Its function is as follows. The dimeric form jaracetin may be a dimeric form of jararhagin-C. It binds to von Willebrand factor (VWF) and induces its interaction with GPIbalpha (GP1BA) (via the vWF A1 domain), resulting in platelet aggregation. Also binds the alpha-2 subunit of the alpha-2/beta-1 (ITGA2/ITGB1) integrin. It potently induces platelet aggregation in citrated platelet-rich plasma. In Bothrops jararaca (Jararaca), this protein is Zinc metalloproteinase-disintegrin-like jararhagin.